We begin with the raw amino-acid sequence, 910 residues long: DNA mismatch repair protein MutS (910 aa).

615–622 (GPNMAGKS) provides a ligand contact to ATP.

It belongs to the DNA mismatch repair MutS family.

This protein is involved in the repair of mismatches in DNA. It is possible that it carries out the mismatch recognition step. This protein has a weak ATPase activity. This chain is DNA mismatch repair protein MutS, found in Clostridium perfringens (strain ATCC 13124 / DSM 756 / JCM 1290 / NCIMB 6125 / NCTC 8237 / Type A).